Here is a 270-residue protein sequence, read N- to C-terminus: Checkpoint signal transducer rad25 (270 aa).

Phosphoserine occurs at positions 234 and 253. The tract at residues Q240–A270 is disordered. Positions E254 to A270 are enriched in basic and acidic residues.

This sequence belongs to the 14-3-3 family. As to quaternary structure, interacts with rad24. Interacts with byr2.

It localises to the cytoplasm. Acts in cell cycle and stress checkpoint signaling by sequestering signal transducers regulated by the checkpoints. Required for the DNA damage checkpoint that ensures that DNA damage is repaired before mitosis is attempted. Sequesters byr2 in the cytoplasm to prevent its translocation to the plasma membrane. The protein is Checkpoint signal transducer rad25 of Schizosaccharomyces pombe (strain 972 / ATCC 24843) (Fission yeast).